We begin with the raw amino-acid sequence, 1048 residues long: Dyslexia-associated protein KIAA0319-like protein (1048 aa).

The Cytoplasmic segment spans residues 1–29 (MEKRLGVKPSPASWVLPGYCWQTSVKLPR). Residues 30-50 (SLYLLYSFFCFSVLWLSTDAD) traverse the membrane as a helical segment. The MANSC domain maps to 49–127 (ADESRCQQGK…PFRTDSSNSM (79 aa)). At 51-928 (ESRCQQGKTL…RDGDSNCEWS (878 aa)) the chain is on the extracellular side. 2 disordered regions span residues 198–218 (HGAM…LSPT) and 231–300 (SFTS…STSA). Positions 231–241 (SFTSNHTTQTP) are enriched in polar residues. Asn246 carries N-linked (GlcNAc...) asparagine glycosylation. Composition is skewed to low complexity over residues 247–261 (VSIH…SPVS) and 287–300 (ATPT…STSA). PKD domains lie at 309–400 (VVSA…VKPE), 408–497 (VAVV…VNKA), 503–593 (VANA…VQPE), 599–687 (QADA…VKEE), and 693–784 (VAKI…VKPD). Residue Asn394 is glycosylated (N-linked (GlcNAc...) asparagine). Positions 593–623 (ENNKPPQADAGPDKELTLPVDSTTLDGSKST) are disordered. The helical transmembrane segment at 929–949 (VLYVIIASFVIVVALGILSWT) threads the bilayer. The Cytoplasmic segment spans residues 950–1048 (TICCCKRQKG…KSRSAREEIL (99 aa)). A Phosphothreonine modification is found at Thr973. Ser977 is modified (phosphoserine). The tract at residues 980-1007 (LKPTSRAGSKQKGPTLSSSLMHSESELD) is disordered. Over residues 985 to 994 (RAGSKQKGPT) the composition is skewed to polar residues. Ser1008 and Ser1030 each carry phosphoserine. The interval 1024–1048 (LYGQNGSVPNGQTPLKSRSAREEIL) is disordered. Residues 1027-1039 (QNGSVPNGQTPLK) show a composition bias toward polar residues. The residue at position 1036 (Thr1036) is a Phosphothreonine.

As to quaternary structure, interacts with RTN4R. N-glycosylated.

The protein localises to the cytoplasmic granule membrane. The protein resides in the golgi apparatus membrane. It localises to the golgi apparatus. Its subcellular location is the trans-Golgi network membrane. It is found in the cell membrane. Functionally, possible role in axon guidance through interaction with RTN4R. Its function is as follows. (Microbial infection) Acts as a receptor for adeno-associated virus and is involved in adeno-associated virus infection through endocytosis system. The protein is Dyslexia-associated protein KIAA0319-like protein of Mus musculus (Mouse).